The chain runs to 491 residues: UDP-N-acetylmuramate--L-alanine ligase (491 aa).

Residue 126 to 132 participates in ATP binding; the sequence is GTHGKTT.

It belongs to the MurCDEF family.

The protein resides in the cytoplasm. The enzyme catalyses UDP-N-acetyl-alpha-D-muramate + L-alanine + ATP = UDP-N-acetyl-alpha-D-muramoyl-L-alanine + ADP + phosphate + H(+). It participates in cell wall biogenesis; peptidoglycan biosynthesis. Functionally, cell wall formation. This is UDP-N-acetylmuramate--L-alanine ligase from Salmonella paratyphi A (strain ATCC 9150 / SARB42).